Reading from the N-terminus, the 434-residue chain is Alpha-enolase (434 aa).

An N-acetylserine modification is found at S2. A Mg(2+)-binding site is contributed by S40. Residue Y44 is modified to Phosphotyrosine. At K60 the chain carries N6-acetyllysine; alternate. Residue K60 is modified to N6-succinyllysine; alternate. K71 is modified (N6-acetyllysine). K89 bears the N6-acetyllysine; alternate mark. K89 bears the N6-succinyllysine; alternate mark. K92 and K126 each carry N6-acetyllysine. Positions 158 and 167 each coordinate substrate. An N6-acetyllysine mark is found at K193 and K199. An N6-acetyllysine; alternate modification is found at K202. Residue K202 forms a Glycyl lysine isopeptide (Lys-Gly) (interchain with G-Cter in SUMO2); alternate linkage. E210 functions as the Proton donor in the catalytic mechanism. An N6-acetyllysine; alternate mark is found at K228 and K233. At K228 the chain carries N6-succinyllysine; alternate. An N6-(2-hydroxyisobutyryl)lysine; alternate modification is found at K228. The residue at position 233 (K233) is an N6-malonyllysine; alternate. A Mg(2+)-binding site is contributed by D245. S254 carries the post-translational modification Phosphoserine. K256 is modified (N6-acetyllysine). A Phosphoserine modification is found at S263. Residue K281 is modified to N6-acetyllysine; alternate. N6-(2-hydroxyisobutyryl)lysine; alternate is present on K281. Y287 carries the post-translational modification Phosphotyrosine. At S291 the chain carries Phosphoserine. E293 and D318 together coordinate Mg(2+). Residues E293 and D318 each coordinate substrate. N6-acetyllysine is present on residues K335 and K343. K343 functions as the Proton acceptor in the catalytic mechanism. Residues 370–373 and K394 contribute to the substrate site; that span reads SHRS. The tract at residues 405–434 is required for interaction with PLG; that stretch reads AKYNQILRIEEELGSKAKFAGRSFRNPLAK. K406 is subject to N6-acetyllysine. At K420 the chain carries N6-acetyllysine; alternate. K420 carries the post-translational modification N6-succinyllysine; alternate. K420 is modified (N6-malonyllysine; alternate).

It belongs to the enolase family. Mammalian enolase is composed of 3 isozyme subunits, alpha, beta and gamma, which can form homodimers or heterodimers which are cell-type and development-specific. ENO1 interacts with PLG in the neuronal plasma membrane and promotes its activation. The C-terminal lysine is required for this binding. In vitro, interacts with several glycolytic enzymes including PKM, PGM, CKM and aldolase. Also binds troponin, in vitro. Interacts with ENO4 and PGAM2. Interacts with CMTM6. Requires Mg(2+) as cofactor. ISGylated. Post-translationally, lysine 2-hydroxyisobutyrylation (Khib) by p300/EP300 activates the phosphopyruvate hydratase activity. In terms of tissue distribution, testis. Found in the principal piece of sperm tail (at protein level). The alpha/alpha homodimer is expressed in embryo and in most adult tissues. The alpha/beta heterodimer and the beta/beta homodimer are found in striated muscle, and the alpha/gamma heterodimer and the gamma/gamma homodimer in neurons. In striated muscle, expression of ENO1 appears to be independent of fiber type.

It is found in the cytoplasm. The protein resides in the cell membrane. The catalysed reaction is (2R)-2-phosphoglycerate = phosphoenolpyruvate + H2O. It functions in the pathway carbohydrate degradation; glycolysis; pyruvate from D-glyceraldehyde 3-phosphate: step 4/5. Its function is as follows. Glycolytic enzyme the catalyzes the conversion of 2-phosphoglycerate to phosphoenolpyruvate. In addition to glycolysis, involved in various processes such as growth control, hypoxia tolerance and allergic responses. May also function in the intravascular and pericellular fibrinolytic system due to its ability to serve as a receptor and activator of plasminogen on the cell surface of several cell-types such as leukocytes and neurons. Stimulates immunoglobulin production. This is Alpha-enolase (Eno1) from Mus musculus (Mouse).